The sequence spans 96 residues: Large ribosomal subunit protein bL21 (96 aa).

The protein belongs to the bacterial ribosomal protein bL21 family. As to quaternary structure, part of the 50S ribosomal subunit. Contacts protein L20.

In terms of biological role, this protein binds to 23S rRNA in the presence of protein L20. The polypeptide is Large ribosomal subunit protein bL21 (Prosthecochloris aestuarii (strain DSM 271 / SK 413)).